A 279-amino-acid chain; its full sequence is MTKADQIFKANIQKIINEGSLSEQARPKYKDGRTAHSKYITGAFAEYDLAKGEFPITTLRPIPIKSAIKELFWIYQDQSNSLDVLEAKYNVHYWNEWEVDQTRTIGQRYGAVVKKHDIISKILKQLAENPWNRRNVISLWDYEAFEETKGLLPCAFQIMFDVRRVGEDLYLDASLTQRSNDILVAHHINAMQYVALQMMFAKHFGWKIGKFFYFVNNLHIYDNQFDQAQELLKRQPVASQPKLVLNVPDGTNFFDIKPDDFELQNYDPVKPQLHFDLAI.

133–134 (RR) contributes to the dUMP binding site. Cysteine 154 acts as the Nucleophile in catalysis. Residues 178–181 (RSND), asparagine 189, and 219–221 (HIY) contribute to the dUMP site. Aspartate 181 serves as a coordination point for (6R)-5,10-methylene-5,6,7,8-tetrahydrofolate. Alanine 278 provides a ligand contact to (6R)-5,10-methylene-5,6,7,8-tetrahydrofolate.

It belongs to the thymidylate synthase family. Bacterial-type ThyA subfamily. As to quaternary structure, homodimer.

It localises to the cytoplasm. The catalysed reaction is dUMP + (6R)-5,10-methylene-5,6,7,8-tetrahydrofolate = 7,8-dihydrofolate + dTMP. It participates in pyrimidine metabolism; dTTP biosynthesis. In terms of biological role, catalyzes the reductive methylation of 2'-deoxyuridine-5'-monophosphate (dUMP) to 2'-deoxythymidine-5'-monophosphate (dTMP) while utilizing 5,10-methylenetetrahydrofolate (mTHF) as the methyl donor and reductant in the reaction, yielding dihydrofolate (DHF) as a by-product. This enzymatic reaction provides an intracellular de novo source of dTMP, an essential precursor for DNA biosynthesis. This is Thymidylate synthase from Streptococcus pyogenes serotype M12 (strain MGAS2096).